Reading from the N-terminus, the 528-residue chain is FAD-dependent monooxygenase DEP2 (528 aa).

The signal sequence occupies residues 1–23 (MEDGRSTFKVIIIGAGVTGLTLA). The FAD site is built by aspartate 37, arginine 110, aspartate 311, and glycine 324. The chain crosses the membrane as a helical span at residues 479–499 (VFPQILGVLMVMWSSVWLFHL). An N-linked (GlcNAc...) asparagine glycan is attached at asparagine 521.

The protein belongs to the paxM FAD-dependent monooxygenase family. It depends on FAD as a cofactor.

It localises to the membrane. It functions in the pathway polyketide biosynthesis. In terms of biological role, FAD-dependent monooxygenase; part of the gene cluster that mediates the biosynthesis of depudecin, a highly oxidized eleven-carbon linear polyketide that acts as a histone deacetylase (HDAC) inhibitor and makes a small contribution to pathogenesis. The reducing polyketide synthase DEP5 is the central enzyme in depudecin biosynthesis by yielding the backbone polyketide chain. The monooxygenases DEP2 and DEP4, as well as the uncharacterized protein DEP1, then act as tailoring enzymes to modify the intermediate polyketide chain into depudecin. The protein is FAD-dependent monooxygenase DEP2 of Alternaria brassicicola (Dark leaf spot agent).